The chain runs to 405 residues: Formate-dependent phosphoribosylglycinamide formyltransferase (405 aa).

Residues 27-28 and E87 each bind N(1)-(5-phospho-beta-D-ribosyl)glycinamide; that span reads EL. Residues R120, K162, 167–172, 202–205, and E210 each bind ATP; these read SSGKGQ and EGFI. Positions 125–320 constitute an ATP-grasp domain; the sequence is RLAAETLGLP…EFELHARALL (196 aa). Mg(2+) contacts are provided by E279 and E291. N(1)-(5-phospho-beta-D-ribosyl)glycinamide contacts are provided by residues D298, K367, and 374 to 375; that span reads RR.

The protein belongs to the PurK/PurT family. In terms of assembly, homodimer.

It catalyses the reaction N(1)-(5-phospho-beta-D-ribosyl)glycinamide + formate + ATP = N(2)-formyl-N(1)-(5-phospho-beta-D-ribosyl)glycinamide + ADP + phosphate + H(+). The protein operates within purine metabolism; IMP biosynthesis via de novo pathway; N(2)-formyl-N(1)-(5-phospho-D-ribosyl)glycinamide from N(1)-(5-phospho-D-ribosyl)glycinamide (formate route): step 1/1. Involved in the de novo purine biosynthesis. Catalyzes the transfer of formate to 5-phospho-ribosyl-glycinamide (GAR), producing 5-phospho-ribosyl-N-formylglycinamide (FGAR). Formate is provided by PurU via hydrolysis of 10-formyl-tetrahydrofolate. This is Formate-dependent phosphoribosylglycinamide formyltransferase from Bordetella avium (strain 197N).